Here is a 425-residue protein sequence, read N- to C-terminus: Serine--tRNA ligase (425 aa).

Position 230–232 (230–232 (TAE)) interacts with L-serine. 261–263 (RSE) is an ATP binding site. L-serine is bound at residue E284. Residue 348–351 (EISS) participates in ATP binding. L-serine is bound at residue S384.

This sequence belongs to the class-II aminoacyl-tRNA synthetase family. Type-1 seryl-tRNA synthetase subfamily. Homodimer. The tRNA molecule binds across the dimer.

It is found in the cytoplasm. The catalysed reaction is tRNA(Ser) + L-serine + ATP = L-seryl-tRNA(Ser) + AMP + diphosphate + H(+). It catalyses the reaction tRNA(Sec) + L-serine + ATP = L-seryl-tRNA(Sec) + AMP + diphosphate + H(+). Its pathway is aminoacyl-tRNA biosynthesis; selenocysteinyl-tRNA(Sec) biosynthesis; L-seryl-tRNA(Sec) from L-serine and tRNA(Sec): step 1/1. Its function is as follows. Catalyzes the attachment of serine to tRNA(Ser). Is also able to aminoacylate tRNA(Sec) with serine, to form the misacylated tRNA L-seryl-tRNA(Sec), which will be further converted into selenocysteinyl-tRNA(Sec). The chain is Serine--tRNA ligase from Streptococcus pyogenes serotype M1.